The sequence spans 141 residues: Period circadian protein (141 aa).

Residues 1 to 141 (EGSGGSGSSG…VTLTESLLNK (141 aa)) form a disordered region. Polar residues predominate over residues 11-23 (HFTTGSNVHMSSV). Residues 29 to 68 (GGTGGTGTGTGTGTGTGTGTGTGTGTGTGTGTGTGTGTGT) show a composition bias toward gly residues. 19 consecutive repeat copies span residues 30–31 (GT), 33–34 (GT), 35–36 (GT), 37–38 (GT), 39–40 (GT), 41–42 (GT), 43–44 (GT), 45–46 (GT), 47–48 (GT), 49–50 (GT), 51–52 (GT), 53–54 (GT), 55–56 (GT), 57–58 (GT), 59–60 (GT), 61–62 (GT), 63–64 (GT), 65–66 (GT), and 67–68 (GT). The tract at residues 30-94 (GTGGTGTGTG…ANGTGTGKGT (65 aa)) is 32 X 2 AA approximate tandem repeats of G-T. The 20; approximate repeat unit spans residues 69–70 (AS). Residues 69 to 85 (ASGTATGTASGTATGTA) are compositionally biased toward low complexity. Residues 71–72 (GT) form repeat 21. The stretch at 73 to 74 (AT) is one 22; approximate repeat. Repeat 23 spans residues 75 to 76 (GT). A 24; approximate repeat occupies 77 to 78 (AS). The stretch at 79-80 (GT) is repeat 25. Residues 81-82 (AT) form a 26; approximate repeat. Copy 27 of the repeat occupies 83–84 (GT). The stretch at 85–86 (AN) is one 28; approximate repeat. 2 consecutive repeat copies span residues 87-88 (GT) and 89-90 (GT). One copy of the 31; approximate repeat lies at 91–92 (GK). Repeat unit 32 spans residues 93–94 (GT). The span at 101–113 (SGSGSGTGTGTGT) shows a compositional bias: gly residues. The segment covering 114–129 (GTTTTTTTGNNSSSST) has biased composition (low complexity). The segment covering 130–141 (PPVTLTESLLNK) has biased composition (polar residues).

Forms a heterodimer with timeless (TIM); the complex then translocates into the nucleus. In terms of processing, phosphorylated with a circadian rhythmicity, probably by the double-time protein (dbt). Phosphorylation could be implicated in the stability of per monomer and in the formation of heterodimer per-tim.

The protein localises to the nucleus. It is found in the cytoplasm. It localises to the perinuclear region. Its function is as follows. Essential for biological clock functions. Determines the period length of circadian and ultradian rhythms; an increase in PER dosage leads to shortened circadian rhythms and a decrease leads to lengthened circadian rhythms. Essential for the circadian rhythmicity of locomotor activity, eclosion behavior, and for the rhythmic component of the male courtship song that originates in the thoracic nervous system. The biological cycle depends on the rhythmic formation and nuclear localization of the TIM-PER complex. Light induces the degradation of TIM, which promotes elimination of PER. Nuclear activity of the heterodimer coordinatively regulates PER and TIM transcription through a negative feedback loop. Behaves as a negative element in circadian transcriptional loop. Does not appear to bind DNA, suggesting indirect transcriptional inhibition. The chain is Period circadian protein (per) from Drosophila serrata (Fruit fly).